The primary structure comprises 757 residues: Chloride channel protein C (757 aa).

Residues 1–96 (MGSSLNKPLS…LHLKKTFGKW (96 aa)) lie on the Cytoplasmic side of the membrane. Transmembrane regions (helical) follow at residues 97 to 117 (IICLFLGVIVGCIAYVIKMVV), 141 to 161 (FLTFLGINLLFVFLSCLMVIV), 196 to 216 (IVSLVLSFSSGLFVGPEGPMI), 253 to 273 (FISIGAATGLAAAFGAPIGGV), 292 to 312 (TFFTCVIAAFTTNFLLQGIGS), 337 to 357 (LLCFCFLGLIGGLLGAFFVFL), 378 to 398 (FEALFVSVVTSVVCYYASFIF), 462 to 482 (LLVFTLISLFFSIWSSGLWVA), 484 to 504 (GLFVPMMMVGAGFGRLFGQTI), 506 to 526 (MWFTNIDSSIYALVGSAAMMA), and 535 to 555 (IVVIMVELTEGTQYLVPIILA). 2 consecutive CBS domains span residues 600–667 (MSKN…TGEE) and 710–757 (MNSS…NDLF).

The protein belongs to the chloride channel (TC 2.A.49) family.

It localises to the membrane. Voltage-gated chloride channel. Chloride channels may have several functions including the regulation of cell volume, membrane potential stabilization and signal transduction. The chain is Chloride channel protein C (clcC) from Dictyostelium discoideum (Social amoeba).